Consider the following 199-residue polypeptide: Recombination protein RecR (199 aa).

The segment at Cys-56–Cys-71 adopts a C4-type zinc-finger fold. The Toprim domain occupies Ser-79–Pro-174.

It belongs to the RecR family.

Functionally, may play a role in DNA repair. It seems to be involved in an RecBC-independent recombinational process of DNA repair. It may act with RecF and RecO. This Frankia casuarinae (strain DSM 45818 / CECT 9043 / HFP020203 / CcI3) protein is Recombination protein RecR.